We begin with the raw amino-acid sequence, 255 residues long: Zinc import ATP-binding protein ZnuC (255 aa).

Residues 4 to 219 form the ABC transporter domain; the sequence is VDVDGLSLRY…PEYRALFGTG (216 aa). 36-43 contributes to the ATP binding site; that stretch reads GPNGSGKT. The interval 234–255 is disordered; the sequence is EHDHHDGCAHGQATEDRTEAAE.

It belongs to the ABC transporter superfamily. Zinc importer (TC 3.A.1.15.5) family. As to quaternary structure, the complex is composed of two ATP-binding proteins (ZnuC), two transmembrane proteins (ZnuB) and a solute-binding protein (ZnuA).

The protein resides in the cell inner membrane. It carries out the reaction Zn(2+)(out) + ATP(in) + H2O(in) = Zn(2+)(in) + ADP(in) + phosphate(in) + H(+)(in). Its function is as follows. Part of the ABC transporter complex ZnuABC involved in zinc import. Responsible for energy coupling to the transport system. This Roseobacter denitrificans (strain ATCC 33942 / OCh 114) (Erythrobacter sp. (strain OCh 114)) protein is Zinc import ATP-binding protein ZnuC.